A 138-amino-acid polypeptide reads, in one-letter code: Transmembrane protein 170A (138 aa).

Residues 1-44 (MEGSEAGGGGLLQQILSLRLVPRVGNGTTYSSPLSTFPEMWYGV) lie on the Lumenal side of the membrane. Asn-26 carries an N-linked (GlcNAc...) asparagine glycan. A helical transmembrane segment spans residues 45–65 (FLWALVSSLSFHVPAALLALF). Over 66–79 (TLRHHKYGRFMSVS) the chain is Cytoplasmic. A helical membrane pass occupies residues 80–100 (LLLMGIVGPITAGILTSAAIA). At 101–110 (GVYRAAGKKM) the chain is on the lumenal side. Residues 111–131 (IPFEALIFEVGQTFCVVVVSF) traverse the membrane as a helical segment. At 132-138 (LRILATL) the chain is on the cytoplasmic side.

The protein belongs to the TMEM170 family.

It localises to the endoplasmic reticulum membrane. The protein resides in the nucleus envelope. Functionally, may regulate membrane morphogenesis in the endoplasmic reticulum (ER) by promoting ER sheet formation at the expense of ER tubules. The sequence is that of Transmembrane protein 170A (TMEM170A) from Gallus gallus (Chicken).